The primary structure comprises 1230 residues: MDVPFPLHRSLSCTSVSNAITHLKIKPILGFVSHGTTSLSVQSSSWRKDGMVTGVSFSICANFSGRRRRKVSTPRSQGSSPKGFVPRKPSGMSTQRKVQKSNGDKESKSTSTSKESEISNQKTVEARVETSDDDTKGVVRDHKFLEDEDEINGSTKSISMSPVRVSSQFVESEETGGDDKDAVKLNKSKRSEESGFIIDSVIREQSGSQGETNASSKGSHAVGTKLYEILQVDVEPQQLKENNAGNVEYKGPVASKLLEITKASDVEHTESNEIDDLDTNSFFKSDLIEEDEPLAAGTVETGDSSLNLRLEMEANLRRQAIERLAEENLLQGIRLFCFPEVVKPDEDVEIFLNRGLSTLKNESDVLIMGAFNEWRYRSFTTRLTETHLNGDWWSCKIHVPKEAYRADFVFFNGQDVYDNNDGNDFSITVKGGMQIIDFENFLLEEKWREQEKLAKEQAERERLAEEQRRIEAEKAEIEADRAQAKEEAAKKKKVLRELMVKATKTRDITWYIEPSEFKCEDKVRLYYNKSSGPLSHAKDLWIHGGYNNWKDGLSIVKKLVKSERIDGDWWYTEVVIPDQALFLDWVFADGPPKHAIAYDNNHRQDFHAIVPNHIPEELYWVEEEHQIFKTLQEERRLREAAMRAKVEKTALLKTETKERTMKSFLLSQKHVVYTEPLDIQAGSSVTVYYNPANTVLNGKPEIWFRCSFNRWTHRLGPLPPQKMSPAENGTHVRATVKVPLDAYMMDFVFSEREDGGIFDNKSGMDYHIPVFGGVAKEPPMHIVHIAVEMAPIAKVGGLGDVVTSLSRAVQDLNHNVDIILPKYDCLKMNNVKDFRFHKNYFWGGTEIKVWFGKVEGLSVYFLEPQNGLFSKGCVYGCSNDGERFGFFCHAALEFLLQGGFSPDIIHCHDWSSAPVAWLFKEQYTHYGLSKSRIVFTIHNLEFGADLIGRAMTNADKATTVSPTYSQEVSGNPVIAPHLHKFHGIVNGIDPDIWDPLNDKFIPIPYTSENVVEGKTAAKEALQRKLGLKQADLPLVGIITRLTHQKGIHLIKHAIWRTLERNGQVVLLGSAPDPRVQNNFVNLANQLHSKYNDRARLCLTYDEPLSHLIYAGADFILVPSIFEPCGLTQLTAMRYGSIPVVRKTGGLYDTVFDVDHDKERAQQCGLEPNGFSFDGADAGGVDYALNRALSAWYDGRDWFNSLCKQVMEQDWSWNRPALDYLELYHAARKLE.

Residues M1 to C60 constitute a chloroplast transit peptide. The interval R66–K189 is disordered. The span at V124–L145 shows a compositional bias: basic and acidic residues. Polar residues predominate over residues N152–V170. Residues G177–K189 show a composition bias toward basic and acidic residues. K794 is a binding site for ADP-alpha-D-glucose.

This sequence belongs to the glycosyltransferase 1 family. Bacterial/plant glycogen synthase subfamily. As to expression, tuber, sink and source leaves.

It is found in the plastid. It localises to the chloroplast. The protein localises to the amyloplast. The enzyme catalyses [(1-&gt;4)-alpha-D-glucosyl](n) + ADP-alpha-D-glucose = [(1-&gt;4)-alpha-D-glucosyl](n+1) + ADP + H(+). Its pathway is glycan biosynthesis; starch biosynthesis. In terms of biological role, may account for most of the soluble starch synthase activity in the tubers. Contributes only a tiny percentage of the granule-bound activity, but may also contribute to the deposition of transient starch in chloroplasts of leaves. This Solanum tuberosum (Potato) protein is Soluble starch synthase 3, chloroplastic/amyloplastic (SS3).